Consider the following 434-residue polypeptide: Serine hydroxymethyltransferase (434 aa).

(6S)-5,6,7,8-tetrahydrofolate-binding positions include leucine 132 and glycine 136 to leucine 138. Residue lysine 241 is modified to N6-(pyridoxal phosphate)lysine.

Belongs to the SHMT family. As to quaternary structure, homodimer. It depends on pyridoxal 5'-phosphate as a cofactor.

The protein resides in the cytoplasm. The catalysed reaction is (6R)-5,10-methylene-5,6,7,8-tetrahydrofolate + glycine + H2O = (6S)-5,6,7,8-tetrahydrofolate + L-serine. It functions in the pathway one-carbon metabolism; tetrahydrofolate interconversion. The protein operates within amino-acid biosynthesis; glycine biosynthesis; glycine from L-serine: step 1/1. In terms of biological role, catalyzes the reversible interconversion of serine and glycine with tetrahydrofolate (THF) serving as the one-carbon carrier. This reaction serves as the major source of one-carbon groups required for the biosynthesis of purines, thymidylate, methionine, and other important biomolecules. Also exhibits THF-independent aldolase activity toward beta-hydroxyamino acids, producing glycine and aldehydes, via a retro-aldol mechanism. The protein is Serine hydroxymethyltransferase of Nitrobacter hamburgensis (strain DSM 10229 / NCIMB 13809 / X14).